The following is a 138-amino-acid chain: ATP synthase epsilon chain 2 (138 aa).

Belongs to the ATPase epsilon chain family. F-type ATPases have 2 components, CF(1) - the catalytic core - and CF(0) - the membrane proton channel. CF(1) has five subunits: alpha(3), beta(3), gamma(1), delta(1), epsilon(1). CF(0) has three main subunits: a, b and c.

It localises to the cell inner membrane. In terms of biological role, produces ATP from ADP in the presence of a proton gradient across the membrane. This is ATP synthase epsilon chain 2 from Syntrophotalea carbinolica (strain DSM 2380 / NBRC 103641 / GraBd1) (Pelobacter carbinolicus).